We begin with the raw amino-acid sequence, 357 residues long: MNSFGKRLIMTTFGESHGKAIGCVLDGVPAGLDIDETFIQNELDRRRPGKSKFATARKELDEVQILSGVFEGRSTGTPIAMVIFNKDQKSRDYSNIKDIFRPGHADFTYWHKYGIRDYRGGGRSSARETAARVAAGAVAKLLLKEFGIEVEAGVCEVAGIEAKEFDFDYAKTSEIFALDPYVETLQKEAILKAKEAHDSVGGAVLVRATNLPVGLGEPIYYKLDAVLAEALMSINAAKAVDIGLGREASRLYGSQNNDQITKEGFISNNAGGILGGISNGEDVIAKVWFKPTPSIFQKQRSIDVNGNEVEVELKGRHDPFVAARGSVVAEAMMALVIADMLLLNATSQLSHLKKVYL.

An NADP(+)-binding site is contributed by arginine 46. FMN-binding positions include arginine 123–serine 125, asparagine 235–alanine 236, glycine 275, lysine 290–serine 294, and arginine 316.

This sequence belongs to the chorismate synthase family. As to quaternary structure, homotetramer. Requires FMNH2 as cofactor.

It carries out the reaction 5-O-(1-carboxyvinyl)-3-phosphoshikimate = chorismate + phosphate. It participates in metabolic intermediate biosynthesis; chorismate biosynthesis; chorismate from D-erythrose 4-phosphate and phosphoenolpyruvate: step 7/7. In terms of biological role, catalyzes the anti-1,4-elimination of the C-3 phosphate and the C-6 proR hydrogen from 5-enolpyruvylshikimate-3-phosphate (EPSP) to yield chorismate, which is the branch point compound that serves as the starting substrate for the three terminal pathways of aromatic amino acid biosynthesis. This reaction introduces a second double bond into the aromatic ring system. This is Chorismate synthase from Nitratiruptor sp. (strain SB155-2).